Here is a 438-residue protein sequence, read N- to C-terminus: Xanthine permease (438 aa).

13 helical membrane-spanning segments follow: residues 11 to 31 (LGIQHVLAMYAGAIVVPLIVG), 41 to 61 (LTYLVSIDIFMCGVATLLQVW), 65 to 85 (FFGIGLPVVLGCTFTAVSPMI), 100 to 120 (IIASGILVILISFFFGKLVSF), 121 to 141 (FPPVVTGSVVTIIGITLMPVA), 154 to 174 (FGDLSNLALAFTVLSIIVLLY), 180 to 200 (FIKSVSILIGILIGTFIAYFM), 220 to 240 (FYFGAPSFHAAPIITMSIVAI), 272 to 292 (AEGLAVLLGGIFNAFPYTAFS), 308 to 328 (VIVVTGVILMAFGLFPKIAAF), 331 to 351 (IIPSAVLGGAMVAMFGMVIAY), 367 to 387 (LLIVACSVGLGLGVTVVPDIF), and 396 to 416 (LLTTNGIVAGSFTAVVLNIVY).

It belongs to the nucleobase:cation symporter-2 (NCS2) (TC 2.A.40) family.

It localises to the cell membrane. Transport of xanthine in the cell. In Bacillus subtilis (strain 168), this protein is Xanthine permease (pbuX).